A 282-amino-acid chain; its full sequence is MHYGLVLFTSDRGITPAAAARLAESHGFRTFYVPEHTHIPVKRQAAHPTTGDASLPDDRYMRTLDPWVSLGAASAVTSRIRLATAVALPVEHDPITLAKSIATLDHLSHGRVSVGVGFGWNTDELVDHGVPPGRRRTMLREYLEAMRALWTQEEACYDGEFVKFGPSWAWPKPVQPHIPVLVGAAGTEKNFKWIARSADGWITTPRDVDIDEPVKLLQDIWAAAGRDGLPQIVALDVKPVPDKLARWAELGVTEVLFGMPDRSADDAAAYVERLAAKLACCV.

This sequence to M.tuberculosis Rv2161c and Rv3079c.

This is an uncharacterized protein from Mycobacterium tuberculosis (strain CDC 1551 / Oshkosh).